A 340-amino-acid chain; its full sequence is Phosphoribosylformylglycinamidine cyclo-ligase (340 aa).

This sequence belongs to the AIR synthase family.

It localises to the cytoplasm. The enzyme catalyses 2-formamido-N(1)-(5-O-phospho-beta-D-ribosyl)acetamidine + ATP = 5-amino-1-(5-phospho-beta-D-ribosyl)imidazole + ADP + phosphate + H(+). It functions in the pathway purine metabolism; IMP biosynthesis via de novo pathway; 5-amino-1-(5-phospho-D-ribosyl)imidazole from N(2)-formyl-N(1)-(5-phospho-D-ribosyl)glycinamide: step 2/2. The sequence is that of Phosphoribosylformylglycinamidine cyclo-ligase from Streptococcus pneumoniae (strain CGSP14).